Here is a 489-residue protein sequence, read N- to C-terminus: Probable cytochrome P450 522A1 (489 aa).

The helical transmembrane segment at 1-21 (MILTIVIIILTVIFVNKYLLN) threads the bilayer. Cysteine 433 serves as a coordination point for heme.

It belongs to the cytochrome P450 family. Heme is required as a cofactor.

The protein resides in the membrane. The sequence is that of Probable cytochrome P450 522A1 (cyp522A1) from Dictyostelium discoideum (Social amoeba).